The chain runs to 173 residues: uncharacterized protein (173 aa).

Positions 1 to 23 (ELTSVAGSGRVDSTPLGSRGVTD) are disordered.

As to expression, component of the acid-insoluble and acid-soluble organic matrix of calcified layers of the shell (at protein level).

It localises to the secreted. This is an uncharacterized protein from Lottia gigantea (Giant owl limpet).